The following is a 246-amino-acid chain: Zorya protein ZorB (246 aa).

The chain crosses the membrane as a helical span at residues 20–40 (FWISYADLMTAMMVLFLVVMV). Positions 86–218 (CHDNRISFGE…RVELRMQFFG (133 aa)) constitute an OmpA-like domain.

It belongs to the MotB family.

The protein localises to the cell inner membrane. Component of antiviral defense system Zorya type I, composed of ZorA, ZorB, ZorC and ZorD. Expression of Zorya type I in E.coli (strain MG1655) confers 10,000-fold resistance to phage SECphi27, 100-fold resistance to lambda, and 10-fold resistance to T7. While most T7 infected Zorya-containing cells undergo abortive infection, a minority produce viable phage progeny. These eventually accumulate to a high multiplicity of infection, leading to culture collapse by 2 hours after initial infection. ZorA and ZorB probably assemble in the cell inner membrane and exert their effect there. The sequence is that of Zorya protein ZorB from Escherichia coli O139:H28 (strain E24377A / ETEC).